Consider the following 237-residue polypeptide: Methylthioribulose-1-phosphate dehydratase (237 aa).

Cys98 serves as a coordination point for substrate. Zn(2+)-binding residues include His116 and His118. The Proton donor/acceptor role is filled by Glu140. His196 provides a ligand contact to Zn(2+).

This sequence belongs to the aldolase class II family. MtnB subfamily. It depends on Zn(2+) as a cofactor.

Its subcellular location is the cytoplasm. The enzyme catalyses 5-(methylsulfanyl)-D-ribulose 1-phosphate = 5-methylsulfanyl-2,3-dioxopentyl phosphate + H2O. It functions in the pathway amino-acid biosynthesis; L-methionine biosynthesis via salvage pathway; L-methionine from S-methyl-5-thio-alpha-D-ribose 1-phosphate: step 2/6. Catalyzes the dehydration of methylthioribulose-1-phosphate (MTRu-1-P) into 2,3-diketo-5-methylthiopentyl-1-phosphate (DK-MTP-1-P). The chain is Methylthioribulose-1-phosphate dehydratase from Laccaria bicolor (strain S238N-H82 / ATCC MYA-4686) (Bicoloured deceiver).